We begin with the raw amino-acid sequence, 432 residues long: Adenylosuccinate synthetase (432 aa).

Residues 13-19 (GDEGKGK) and 41-43 (GHT) each bind GTP. Catalysis depends on D14, which acts as the Proton acceptor. 2 residues coordinate Mg(2+): D14 and G41. IMP contacts are provided by residues 14-17 (DEGK), 39-42 (NAGH), T130, R144, Q225, T240, and R304. The active-site Proton donor is the H42. 300-306 (ATTGRRR) contacts substrate. GTP is bound by residues R306, 332–334 (KLD), and 415–417 (STG).

This sequence belongs to the adenylosuccinate synthetase family. In terms of assembly, homodimer. Requires Mg(2+) as cofactor.

It is found in the cytoplasm. The enzyme catalyses IMP + L-aspartate + GTP = N(6)-(1,2-dicarboxyethyl)-AMP + GDP + phosphate + 2 H(+). It participates in purine metabolism; AMP biosynthesis via de novo pathway; AMP from IMP: step 1/2. Its function is as follows. Plays an important role in the de novo pathway of purine nucleotide biosynthesis. Catalyzes the first committed step in the biosynthesis of AMP from IMP. This Serratia proteamaculans (strain 568) protein is Adenylosuccinate synthetase.